Here is a 620-residue protein sequence, read N- to C-terminus: Glutathione-regulated potassium-efflux system protein KefC (620 aa).

The next 12 membrane-spanning stretches (helical) occupy residues 4 to 24 (HTLV…PIAV), 26 to 46 (LGLG…PWGL), 54 to 74 (SILH…GLEL), 90 to 110 (GALQ…LLGL), 114 to 134 (VAEL…MQAM), 149 to 169 (FAVL…IPLL), 178 to 198 (MGAF…VVLL), 218 to 238 (VFSA…EEVG), 270 to 290 (GLLL…GTLL), 294 to 314 (LRIV…LWLI), 327 to 347 (WFAV…GAAQ), and 359 to 379 (SLTL…VILN). One can recognise an RCK N-terminal domain in the interval 399–518 (QPRVIIAGFG…AGVEKPERET (120 aa)). A disordered region spans residues 597-620 (GWQGTEEGKHTGNMADEPETKPSS).

This sequence belongs to the monovalent cation:proton antiporter 2 (CPA2) transporter (TC 2.A.37) family. KefC subfamily. In terms of assembly, homodimer. Interacts with the regulatory subunit KefF.

It localises to the cell inner membrane. Pore-forming subunit of a potassium efflux system that confers protection against electrophiles. Catalyzes K(+)/H(+) antiport. This Escherichia coli O139:H28 (strain E24377A / ETEC) protein is Glutathione-regulated potassium-efflux system protein KefC.